We begin with the raw amino-acid sequence, 4545 residues long: Prolow-density lipoprotein receptor-related protein 1 (4545 aa).

The N-terminal stretch at 1 to 19 (MLTPPLLLLLPLLSALVAG) is a signal peptide. At 20–4424 (ATMDAPKTCS…SQQQPGHMTS (4405 aa)) the chain is on the extracellular side. LDL-receptor class A domains are found at residues 27 to 66 (TCSPKQFACRDQITCISKGWRCDGERDCPDGSDEAPEICP) and 72 to 110 (RCPPNEHSCLGTELCVPMSRLCNGIQDCMDGSDEGAHCR). Disulfide bonds link Cys28-Cys41, Cys35-Cys54, Cys48-Cys65, Cys73-Cys86, Cys80-Cys99, and Cys93-Cys109. Asn115, Asn137, Asn186, Asn240, and Asn275 each carry an N-linked (GlcNAc...) asparagine glycan. LDL-receptor class B repeat units follow at residues 293–335 (GNFY…DPAM), 336–379 (GKVF…DLVS), and 380–423 (RLVY…FENY). A glycan (N-linked (GlcNAc...) asparagine) is linked at Asn358. An N-linked (GlcNAc...) asparagine glycan is attached at Asn447. 4 LDL-receptor class B repeats span residues 572–614 (GFIY…DWMG), 615–660 (DNLY…DPLN), 661–711 (GWMY…DIPA), and 712–755 (GRLY…HGNY). The HAT 1 repeat unit spans residues 639 to 671 (TRKTLIEGKMTHPRAIVVDPLNGWMYWTDWEED). N-linked (GlcNAc...) asparagine glycosylation is present at Asn730. 8 consecutive LDL-receptor class A domains span residues 854–892 (QCQPGEFACANNRCIQERWKCDGDNDCLDNSDEAPALCH), 895–933 (TCPSDRFKCENNRCIPNRWLCDGDNDCGNSEDESNATCS), 936–973 (TCPPNQFSCASGRCIPISWTCDLDDDCGDRSDESASCA), 976–1013 (TCFPLTQFTCNNGRCININWRCDNDNDCGDNSDEAGCS), 1015–1053 (SCSSTQFKCNSGRCIPEHWTCDGDNDCGDYSDETHANCT), 1062–1099 (GCHSDEFQCRLDGLCIPLRWRCDGDTDCMDSSDEKGCE), 1104–1142 (VCDPNVKFGCKDSARCISKAWVCDGDSDCEDNSDEENCE), and 1145–1184 (ACRPPSHPCANNTSVCLSPDKLCDGKDDCGDGSDEGELCD). Cystine bridges form between Cys855–Cys867, Cys862–Cys880, Cys874–Cys891, Cys896–Cys908, Cys903–Cys921, Cys915–Cys932, Cys937–Cys949, Cys944–Cys962, Cys956–Cys972, Cys977–Cys990, Cys985–Cys1003, Cys997–Cys1012, Cys1016–Cys1028, Cys1023–Cys1041, Cys1035–Cys1052, Cys1063–Cys1076, Cys1070–Cys1089, Cys1083–Cys1098, Cys1105–Cys1119, Cys1113–Cys1132, Cys1126–Cys1141, Cys1146–Cys1160, Cys1153–Cys1173, and Cys1167–Cys1183. Residues Trp872, Asp875, Asp877, Asp879, Asp885, and Glu886 each coordinate Ca(2+). Asn929 carries N-linked (GlcNAc...) asparagine glycosylation. The Ca(2+) site is built by Trp1033, Asp1036, Asp1038, Asp1040, Asp1046, and Glu1047. Asn1051 carries N-linked (GlcNAc...) asparagine glycosylation. The Ca(2+) site is built by Trp1081, Asp1084, Asp1086, Asp1088, Asp1094, and Glu1095. N-linked (GlcNAc...) asparagine glycosylation occurs at Asn1156. Residues Asn1196 and Asn1219 are each glycosylated (N-linked (GlcNAc...) asparagine). 5 LDL-receptor class B repeats span residues 1310-1356 (SALY…DWIA), 1357-1399 (GNIY…DPRD), 1400-1446 (GILF…DYLE), 1447-1491 (KRIL…YGGE), and 1492-1532 (VYWT…YHPS). HAT repeat units lie at residues 1380 to 1413 (TTLLAGDIEHPRAIALDPRDGILFWTDWDASLPR) and 1470 to 1503 (MEVLRGHEFLSHPFAVTLYGGEVYWTDWRTNTLA). Residues Asn1512, Asn1559, Asn1576, Asn1617, and Asn1646 are each glycosylated (N-linked (GlcNAc...) asparagine). LDL-receptor class B repeat units follow at residues 1628–1670 (QRVY…DWVS), 1671–1714 (RNLF…HPLR), 1715–1754 (GKLYWTDGDNISMVNMDGSNRTLLFSGQKGPVGLAIDFPE), and 1755–1799 (SKLY…MGDK). The stretch at 1653 to 1684 (VVSADLPNAHGLAVDWVSRNLFWTSYDTNKKQ) is one HAT 4 repeat. N-linked (GlcNAc...) asparagine glycosylation is found at Asn1724, Asn1734, Asn1764, Asn1826, and Asn1934. LDL-receptor class B repeat units lie at residues 1935-1977 (DTIY…DWIA), 1978-2020 (GNIY…HPEK), 2021-2064 (GYLF…DYQG), and 2065-2108 (GKLY…FEDF). Asn1996 carries N-linked (GlcNAc...) asparagine glycosylation. Position 2010 is an N6-acetyllysine (Lys2010). N-linked (GlcNAc...) asparagine glycosylation occurs at Asn2049. Residues Asn2118 and Asn2128 are each glycosylated (N-linked (GlcNAc...) asparagine). 5 LDL-receptor class B repeats span residues 2254–2295 (NRIF…HRGW), 2296–2344 (DTLY…DECQ), 2345–2389 (NLMF…DHRA), 2390–2432 (EKLY…YGEH), and 2433–2474 (IFWT…VAND). HAT repeat units follow at residues 2277-2309 (TTIVENVGSVEGLAYHRGWDTLYWTSYTTSTIT), 2325-2358 (TVITMSGDDHPRAFVLDECQNLMFWTNWNELHPS), and 2411-2444 (HRYVILKSEPVHPFGLAVYGEHIFWTDWVRRAVQ). Asn2473, Asn2503, and Asn2522 each carry an N-linked (GlcNAc...) asparagine glycan. LDL-receptor class A domains follow at residues 2524–2563 (SCRAQDEFECANGECISFSLTCDGVSHCKDKSDEKPSYCN), 2566–2602 (RCKKTFRQCNNGRCVSNMLWCNGVDDCGDGSDEIPCN), 2605–2641 (ACGVGEFRCRDGSCIGNSSRCNQFVDCEDASDEMNCS), 2639–2690 (NCSA…RDCP), 2696–2732 (RCPLNYFACPSGRCIPMSWTCDKEDDCENGEDETHCN), 2734–2771 (FCSEAQFECQNHRCISKQWLCDGSDDCGDGSDEAAHCE), and 2774–2814 (TCGP…AGCL). 6 disulfide bridges follow: Cys2525-Cys2538, Cys2533-Cys2551, Cys2545-Cys2562, Cys2567-Cys2579, Cys2574-Cys2592, and Cys2586-Cys2601. The N-linked (GlcNAc...) asparagine glycan is linked to Asn2602. 15 disulfides stabilise this stretch: Cys2606–Cys2618, Cys2613–Cys2631, Cys2625–Cys2640, Cys2640–Cys2667, Cys2645–Cys2680, Cys2674–Cys2689, Cys2697–Cys2709, Cys2704–Cys2722, Cys2716–Cys2731, Cys2735–Cys2747, Cys2742–Cys2760, Cys2754–Cys2770, Cys2775–Cys2788, Cys2782–Cys2801, and Cys2795–Cys2813. 2 N-linked (GlcNAc...) asparagine glycosylation sites follow: Asn2621 and Asn2639. N-linked (GlcNAc...) asparagine glycosylation is present at Asn2816. LDL-receptor class A domains follow at residues 2818 to 2855 (TCDDREFMCQNRLCIPKHFVCDHDRDCADGSDESPECE), 2858 to 2899 (TCGP…PHCT), and 2904 to 2941 (KCNASSQFLCSSGRCVAEALLCNGQDDCGDGSDERGCH). 11 cysteine pairs are disulfide-bonded: Cys2819–Cys2831, Cys2826–Cys2844, Cys2838–Cys2854, Cys2859–Cys2871, Cys2866–Cys2885, Cys2879–Cys2898, Cys2905–Cys2918, Cys2913–Cys2931, Cys2925–Cys2940, Cys2987–Cys2997, and Cys2993–Cys3006. A glycan (N-linked (GlcNAc...) asparagine) is linked at Asn2906. The 36-residue stretch at 2983-3018 (DVDECSTTFPCSQLCINTHGSYKCLCVEGYAPRGGD) folds into the EGF-like 1; calcium-binding domain. N-linked (GlcNAc...) asparagine glycosylation is found at Asn3049 and Asn3090. 5 LDL-receptor class B repeats span residues 3070-3114 (QMIY…DWVG), 3115-3157 (GNLY…DVQN), 3158-3201 (GYLY…DYVT), 3202-3244 (ERIY…FEDY), and 3245-3285 (VYWT…FHAL). HAT repeat units follow at residues 3128–3171 (EVSK…HSLI) and 3224–3256 (RHVVLSQDIPHIFALTLFEDYVYWTDWETKSIN). N-linked (GlcNAc...) asparagine glycosylation is found at Asn3265 and Asn3334. 11 LDL-receptor class A domains span residues 3334-3371 (NCTASQFVCKNDKCIPFWWKCDTEDDCGDHSDEPPDCP), 3374-3410 (KCRPGQFQCSTGICTNPAFICDGDNDCQDNSDEANCD), 3413-3450 (VCLPSQFKCTNTNRCIPGIFRCNGQDNCGDGEDERDCP), 3453-3491 (TCAPNQFQCSITKRCIPRVWVCDRDNDCVDGSDEPANCT), 3494-3533 (TCGVDEFRCKDSGRCIPARWKCDGEDDCGDGSDEPKEECD), 3536-3572 (TCEPYQFRCKNNRCVPGRWQCDYDNDCGDNSDEESCT), 3575-3611 (PCSESEFSCANGRCIAGRWKCDGDHDCADGSDEKDCT), 3613-3649 (RCDMDQFQCKSGHCIPLRWRCDADADCMDGSDEEACG), 3654-3692 (TCPLDEFQCNNTLCKPLAWKCDGEDDCGDNSDENPEECT), 3695-3733 (QCPPNRPFRCKNDRVCLWIGRQCDGTDNCGDGTDEEDCE), and 3741-3778 (HCKDKKEFLCRNQRCLSSSLRCNMFDDCGDGSDEEDCS). 33 disulfide bridges follow: Cys3335-Cys3347, Cys3342-Cys3360, Cys3354-Cys3370, Cys3375-Cys3387, Cys3382-Cys3400, Cys3394-Cys3409, Cys3414-Cys3427, Cys3421-Cys3440, Cys3434-Cys3449, Cys3454-Cys3467, Cys3461-Cys3480, Cys3474-Cys3490, Cys3495-Cys3508, Cys3502-Cys3521, Cys3515-Cys3532, Cys3537-Cys3549, Cys3544-Cys3562, Cys3556-Cys3571, Cys3576-Cys3588, Cys3583-Cys3601, Cys3595-Cys3610, Cys3614-Cys3626, Cys3621-Cys3639, Cys3633-Cys3648, Cys3655-Cys3667, Cys3662-Cys3680, Cys3674-Cys3691, Cys3696-Cys3710, Cys3704-Cys3723, Cys3717-Cys3732, Cys3742-Cys3755, Cys3750-Cys3768, and Cys3762-Cys3777. An N-linked (GlcNAc...) asparagine glycan is attached at Asn3489. An N-linked (GlcNAc...) asparagine glycan is attached at Asn3663. N-linked (GlcNAc...) asparagine glycans are attached at residues Asn3789 and Asn3840. Residues 3913 to 3925 (GRVYWTNWHTGTI) form an LDL-receptor class B 31 repeat. N-linked (GlcNAc...) asparagine glycosylation occurs at Asn3954. 3 LDL-receptor class B repeats span residues 3971 to 4013 (GNVY…DPLR), 4014 to 4057 (GTMY…DYHN), and 4058 to 4102 (ERLY…FEDY). An HAT 10 repeat occupies 3995–4027 (TLISGMIDEPHAIVVDPLRGTMYWSDWGNHPKI). Asn4076, Asn4126, and Asn4180 each carry an N-linked (GlcNAc...) asparagine glycan. 4 consecutive EGF-like domains span residues 4197–4230 (RPGTCTLQCFNGGSCFLNARRQPKCRCQPRYTGD), 4233–4269 (ELDQCWEYCHNGGTCAASPSGMPTCRCPTGFTGPRCT), 4270–4302 (QQVCAGYCANNSTCTVNQGNQPQCRCLPGFLGD), and 4305–4341 (QYRQCSGFCENFGTCQMAADGSRQCRCTVYFEGTRCE). Disulfide bonds link Cys4201/Cys4211, Cys4205/Cys4221, Cys4237/Cys4247, Cys4241/Cys4257, Cys4259/Cys4268, Cys4273/Cys4283, Cys4277/Cys4293, Cys4309/Cys4319, Cys4313/Cys4329, and Cys4331/Cys4340. N-linked (GlcNAc...) asparagine glycosylation occurs at Asn4280. Asn4365 carries an N-linked (GlcNAc...) asparagine glycan. Positions 4376–4410 (LTCIDHCSNGGSCTMNSKMMPECQCPPHMTGPRCE) constitute an EGF-like 6 domain. 3 disulfides stabilise this stretch: Cys4378-Cys4388, Cys4382-Cys4398, and Cys4400-Cys4409. A helical membrane pass occupies residues 4425–4445 (ILIPLLLLLLLLLVAGVVFWY). Residues 4446–4545 (KRRVRGAKGF…PEDEIGDPLA (100 aa)) lie on the Cytoplasmic side of the membrane. The interval 4446–4545 (KRRVRGAKGF…PEDEIGDPLA (100 aa)) is interaction with MAFB. Thr4461 carries the phosphothreonine modification. Tyr4508 bears the Phosphotyrosine mark. Phosphoserine occurs at positions 4518, 4521, and 4524.

It belongs to the LDLR family. Heterodimer of an 85-kDa membrane-bound carboxyl subunit and a non-covalently attached 515-kDa N-terminal subunit. Intracellular domain interacts with MAFB. Found in a complex with PID1/PCLI1, LRP1 and CUBNI. Interacts with SNX17, PID1/PCLI1, PDGF and CUBN. The intracellular domain interacts with SHC1, GULP1 and DAB1. Can weakly interact (via NPXY motif) with DAB2 (via PID domain); the interaction is enhanced by tyrosine phosphorylation of the NPXY motif. Interacts with MDK; promotes neuronal survival. Interacts with LRPAP1; this interaction is followed by rapid internalization. Interacts with uPA/PLAU and PAI1/SERPINE1, either individually or in complex with each other, leading to rapid endocytosis; this interaction is abolished in the presence of LRPAP1/RAP. Also interacts with tPA/PLAT alone or in complex with SERPINE1. Interacts with the urokinase receptor PLAUR; this interaction leads to PLAUR internalization and is impaired in the presence of SORL1. Interacts with PDGFB. Interacts with TAU/MAPT, leading to endocytosis; this interaction is reduced in the presence of LRPAP1/RAP. Interacts with IGFBP3. Interacts with ADGRG6. Cleaved into a 85 kDa membrane-spanning subunit (LRP-85) and a 515 kDa large extracellular domain (LRP-515) that remains non-covalently associated. Gamma-secretase-dependent cleavage of LRP-85 releases the intracellular domain from the membrane. Post-translationally, phosphorylated on serine and threonine residues. In terms of processing, phosphorylated on tyrosine residues upon stimulation with PDGF. Tyrosine phosphorylation promotes interaction with SHC1.

It localises to the cell membrane. It is found in the membrane. The protein localises to the coated pit. The protein resides in the golgi outpost. Its subcellular location is the cytoplasm. It localises to the cytoskeleton. It is found in the microtubule organizing center. The protein localises to the nucleus. Functionally, endocytic receptor involved in endocytosis and in phagocytosis of apoptotic cells. Required for early embryonic development. Involved in cellular lipid homeostasis. Involved in the plasma clearance of chylomicron remnants and activated LRPAP1 (alpha 2-macroglobulin), as well as the local metabolism of complexes between plasminogen activators and their endogenous inhibitors. Acts as an LRPAP1 alpha-2-macroglobulin receptor. Acts as a TAU/MAPT receptor and controls the endocytosis of TAU/MAPT as well as its subsequent spread. May modulate cellular events, such as APP metabolism, kinase-dependent intracellular signaling, neuronal calcium signaling as well as neurotransmission. Also acts as a receptor for IGFBP3 to mediate cell growth inhibition. This Rattus norvegicus (Rat) protein is Prolow-density lipoprotein receptor-related protein 1.